The chain runs to 311 residues: 4-diphosphocytidyl-2-C-methyl-D-erythritol kinase (311 aa).

Residue Lys-16 is part of the active site. An ATP-binding site is contributed by 100-110; the sequence is PIGAGLAGGSS. Residue Asp-142 is part of the active site.

It belongs to the GHMP kinase family. IspE subfamily.

The enzyme catalyses 4-CDP-2-C-methyl-D-erythritol + ATP = 4-CDP-2-C-methyl-D-erythritol 2-phosphate + ADP + H(+). It participates in isoprenoid biosynthesis; isopentenyl diphosphate biosynthesis via DXP pathway; isopentenyl diphosphate from 1-deoxy-D-xylulose 5-phosphate: step 3/6. Its function is as follows. Catalyzes the phosphorylation of the position 2 hydroxy group of 4-diphosphocytidyl-2C-methyl-D-erythritol. This Prochlorococcus marinus (strain MIT 9312) protein is 4-diphosphocytidyl-2-C-methyl-D-erythritol kinase.